Reading from the N-terminus, the 286-residue chain is uncharacterized protein (286 aa).

An HTH lysR-type domain is found at 1–58; it reads MLLEGIETLLVLSKEKTMSRTGSQLYISQSAVSKRIANLEKKLGKKLIVPAGRHIKLT. The H-T-H motif DNA-binding region spans 18-37; that stretch reads MSRTGSQLYISQSAVSKRIA.

This sequence belongs to the LysR transcriptional regulatory family.

This is an uncharacterized protein from Vibrio cholerae serotype O1 (strain ATCC 39315 / El Tor Inaba N16961).